The primary structure comprises 435 residues: D-amino acid dehydrogenase (435 aa).

3–17 (VLILGSGVIGTTSAW) contributes to the FAD binding site.

Belongs to the DadA oxidoreductase family. The cofactor is FAD.

It catalyses the reaction a D-alpha-amino acid + A + H2O = a 2-oxocarboxylate + AH2 + NH4(+). The protein operates within amino-acid degradation; D-alanine degradation; NH(3) and pyruvate from D-alanine: step 1/1. Oxidative deamination of D-amino acids. The sequence is that of D-amino acid dehydrogenase from Xylella fastidiosa (strain 9a5c).